A 315-amino-acid chain; its full sequence is Acetyl-coenzyme A carboxylase carboxyl transferase subunit alpha (315 aa).

One can recognise a CoA carboxyltransferase C-terminal domain in the interval 38 to 292; sequence RLQKKSNELT…KLRLKEDLAE (255 aa).

It belongs to the AccA family. As to quaternary structure, acetyl-CoA carboxylase is a heterohexamer composed of biotin carboxyl carrier protein (AccB), biotin carboxylase (AccC) and two subunits each of ACCase subunit alpha (AccA) and ACCase subunit beta (AccD).

It localises to the cytoplasm. The catalysed reaction is N(6)-carboxybiotinyl-L-lysyl-[protein] + acetyl-CoA = N(6)-biotinyl-L-lysyl-[protein] + malonyl-CoA. The protein operates within lipid metabolism; malonyl-CoA biosynthesis; malonyl-CoA from acetyl-CoA: step 1/1. Functionally, component of the acetyl coenzyme A carboxylase (ACC) complex. First, biotin carboxylase catalyzes the carboxylation of biotin on its carrier protein (BCCP) and then the CO(2) group is transferred by the carboxyltransferase to acetyl-CoA to form malonyl-CoA. In Haemophilus influenzae (strain PittEE), this protein is Acetyl-coenzyme A carboxylase carboxyl transferase subunit alpha.